Here is a 110-residue protein sequence, read N- to C-terminus: NADH-quinone oxidoreductase subunit K (110 aa).

3 helical membrane passes run 13-33, 38-58, and 70-90; these read VTHG…GIII, ILIL…NFLI, and VFVF…LAIV.

This sequence belongs to the complex I subunit 4L family. NDH-1 is composed of 14 different subunits. Subunits NuoA, H, J, K, L, M, N constitute the membrane sector of the complex.

The protein resides in the cell inner membrane. It catalyses the reaction a quinone + NADH + 5 H(+)(in) = a quinol + NAD(+) + 4 H(+)(out). In terms of biological role, NDH-1 shuttles electrons from NADH, via FMN and iron-sulfur (Fe-S) centers, to quinones in the respiratory chain. The immediate electron acceptor for the enzyme in this species is believed to be ubiquinone. Couples the redox reaction to proton translocation (for every two electrons transferred, four hydrogen ions are translocated across the cytoplasmic membrane), and thus conserves the redox energy in a proton gradient. This Francisella tularensis subsp. holarctica (strain FTNF002-00 / FTA) protein is NADH-quinone oxidoreductase subunit K.